A 236-amino-acid chain; its full sequence is Biosynthetic peptidoglycan transglycosylase (236 aa).

A helical transmembrane segment spans residues 12–31 (ALLWFVAGSIVLVLVFRWVP).

This sequence belongs to the glycosyltransferase 51 family.

The protein localises to the cell inner membrane. The catalysed reaction is [GlcNAc-(1-&gt;4)-Mur2Ac(oyl-L-Ala-gamma-D-Glu-L-Lys-D-Ala-D-Ala)](n)-di-trans,octa-cis-undecaprenyl diphosphate + beta-D-GlcNAc-(1-&gt;4)-Mur2Ac(oyl-L-Ala-gamma-D-Glu-L-Lys-D-Ala-D-Ala)-di-trans,octa-cis-undecaprenyl diphosphate = [GlcNAc-(1-&gt;4)-Mur2Ac(oyl-L-Ala-gamma-D-Glu-L-Lys-D-Ala-D-Ala)](n+1)-di-trans,octa-cis-undecaprenyl diphosphate + di-trans,octa-cis-undecaprenyl diphosphate + H(+). Its pathway is cell wall biogenesis; peptidoglycan biosynthesis. In terms of biological role, peptidoglycan polymerase that catalyzes glycan chain elongation from lipid-linked precursors. The chain is Biosynthetic peptidoglycan transglycosylase from Pseudomonas putida (strain ATCC 47054 / DSM 6125 / CFBP 8728 / NCIMB 11950 / KT2440).